We begin with the raw amino-acid sequence, 258 residues long: F-box/SPRY domain-containing protein 1 (258 aa).

An F-box domain is found at threonine 6–glutamine 54. The region spanning phenylalanine 64 to leucine 256 is the B30.2/SPRY domain.

This sequence belongs to the FBXO45/Fsn family. In terms of assembly, component of an E3 ubiquitin ligase complex composed of hiw and Fsn.

It is found in the synapse. It participates in protein modification; protein ubiquitination. Functionally, required in the presynaptic motoneuron to down-regulate the levels of wnd and restrain synaptic terminal growth at the neuromuscular junction (NMJ). This is F-box/SPRY domain-containing protein 1 from Aedes aegypti (Yellowfever mosquito).